Here is a 607-residue protein sequence, read N- to C-terminus: Probable Ufm1-specific protease 2 (607 aa).

Active-site residues include cysteine 440, aspartate 564, and histidine 566.

It belongs to the peptidase C78 family.

In terms of biological role, thiol protease which recognizes and hydrolyzes the peptide bond at the C-terminal Gly of UFM1, a ubiquitin-like modifier protein bound to a number of target proteins. Does not hydrolyze SUMO1 or ISG15 ubiquitin-like proteins. This Drosophila melanogaster (Fruit fly) protein is Probable Ufm1-specific protease 2.